The primary structure comprises 202 residues: NADH-quinone oxidoreductase subunit B 2 (202 aa).

The [4Fe-4S] cluster site is built by cysteine 38, cysteine 39, cysteine 104, and cysteine 133.

Belongs to the complex I 20 kDa subunit family. As to quaternary structure, NDH-1 is composed of 14 different subunits. Subunits NuoB, C, D, E, F, and G constitute the peripheral sector of the complex. Requires [4Fe-4S] cluster as cofactor.

It is found in the cell inner membrane. It catalyses the reaction a quinone + NADH + 5 H(+)(in) = a quinol + NAD(+) + 4 H(+)(out). In terms of biological role, NDH-1 shuttles electrons from NADH, via FMN and iron-sulfur (Fe-S) centers, to quinones in the respiratory chain. The immediate electron acceptor for the enzyme in this species is believed to be ubiquinone. Couples the redox reaction to proton translocation (for every two electrons transferred, four hydrogen ions are translocated across the cytoplasmic membrane), and thus conserves the redox energy in a proton gradient. The sequence is that of NADH-quinone oxidoreductase subunit B 2 from Koribacter versatilis (strain Ellin345).